The following is a 447-amino-acid chain: Asparagine--tRNA ligase (447 aa).

It belongs to the class-II aminoacyl-tRNA synthetase family. As to quaternary structure, homodimer.

Its subcellular location is the cytoplasm. It carries out the reaction tRNA(Asn) + L-asparagine + ATP = L-asparaginyl-tRNA(Asn) + AMP + diphosphate + H(+). This Mycoplasma mobile (strain ATCC 43663 / 163K / NCTC 11711) (Mesomycoplasma mobile) protein is Asparagine--tRNA ligase.